The following is a 196-amino-acid chain: GTP cyclohydrolase 1 (196 aa).

Zn(2+)-binding residues include Cys84, His87, and Cys157.

Belongs to the GTP cyclohydrolase I family. As to quaternary structure, toroid-shaped homodecamer, composed of two pentamers of five dimers.

It catalyses the reaction GTP + H2O = 7,8-dihydroneopterin 3'-triphosphate + formate + H(+). The protein operates within cofactor biosynthesis; 7,8-dihydroneopterin triphosphate biosynthesis; 7,8-dihydroneopterin triphosphate from GTP: step 1/1. The protein is GTP cyclohydrolase 1 of Corynebacterium glutamicum (strain R).